The following is a 178-amino-acid chain: MPARPARCYRRIKGPPYTREEYIHGAPMIQIPKFDMGTTSAAARAAFTMVAKLVAEERGQIRMQALEAARQISSKYLTKYVGDANYYLRLNVVPHHVLRENRMLAMAGADRLQEGMRLAFGSPAGRAARVEPGQVIFYVEFKPEHLAHVKEALRRAASKLPIPTRIVVEPKGDGKTAS.

It belongs to the universal ribosomal protein uL16 family.

The polypeptide is Large ribosomal subunit protein uL16 (Pyrobaculum calidifontis (strain DSM 21063 / JCM 11548 / VA1)).